Reading from the N-terminus, the 337-residue chain is Nodulation protein D 2 (337 aa).

In terms of domain architecture, HTH lysR-type spans 6–63 (LDLNLLVVLDSLMTARNLTAAARSINLSQPAMSAAVARLRAYFGDELFTMRGRTLVPT). Positions 23–42 (LTAAARSINLSQPAMSAAVA) form a DNA-binding region, H-T-H motif.

This sequence belongs to the LysR transcriptional regulatory family.

In terms of biological role, nodD regulates the expression of the nodABCFE genes which encode other nodulation proteins. NodD is also a negative regulator of its own expression. Binds flavonoids as inducers. In Bradyrhizobium sp. (strain NC92), this protein is Nodulation protein D 2 (nodD2).